Consider the following 105-residue polypeptide: PTS system lactose-specific EIIA component (105 aa).

Residues 4 to 102 (EEMTLLGFEI…IHHLIELYKR (99 aa)) enclose the PTS EIIA type-3 domain. Residue H78 is the Tele-phosphohistidine intermediate of the active site. The residue at position 78 (H78) is a Phosphohistidine; by HPr. D81 lines the Mg(2+) pocket.

In terms of assembly, homotrimer. The cofactor is Mg(2+).

It is found in the cytoplasm. Functionally, the phosphoenolpyruvate-dependent sugar phosphotransferase system (sugar PTS), a major carbohydrate active transport system, catalyzes the phosphorylation of incoming sugar substrates concomitantly with their translocation across the cell membrane. The enzyme II LacEF PTS system is involved in lactose transport. The chain is PTS system lactose-specific EIIA component from Lactococcus lactis subsp. lactis (Streptococcus lactis).